The sequence spans 444 residues: Ribulose bisphosphate carboxylase large chain (444 aa).

Residue Lys-5 is modified to N6,N6,N6-trimethyllysine. Residues Asn-114 and Thr-164 each coordinate substrate. Lys-166 acts as the Proton acceptor in catalysis. Lys-168 is a substrate binding site. Mg(2+)-binding residues include Lys-192, Asp-194, and Glu-195. The residue at position 192 (Lys-192) is an N6-carboxylysine. Catalysis depends on His-285, which acts as the Proton acceptor. Substrate-binding residues include Arg-286, His-318, and Ser-370.

It belongs to the RuBisCO large chain family. Type I subfamily. Heterohexadecamer of 8 large chains and 8 small chains; disulfide-linked. The disulfide link is formed within the large subunit homodimers. Mg(2+) serves as cofactor. In terms of processing, the disulfide bond which can form in the large chain dimeric partners within the hexadecamer appears to be associated with oxidative stress and protein turnover.

It is found in the plastid. The protein resides in the chloroplast. The enzyme catalyses 2 (2R)-3-phosphoglycerate + 2 H(+) = D-ribulose 1,5-bisphosphate + CO2 + H2O. It catalyses the reaction D-ribulose 1,5-bisphosphate + O2 = 2-phosphoglycolate + (2R)-3-phosphoglycerate + 2 H(+). RuBisCO catalyzes two reactions: the carboxylation of D-ribulose 1,5-bisphosphate, the primary event in carbon dioxide fixation, as well as the oxidative fragmentation of the pentose substrate in the photorespiration process. Both reactions occur simultaneously and in competition at the same active site. This chain is Ribulose bisphosphate carboxylase large chain, found in Botrychium strictum (Fern).